Consider the following 337-residue polypeptide: D-alanine--D-alanine ligase (337 aa).

An ATP-grasp domain is found at 124 to 330 (KMWFSALGIP…FTEYLSLVIN (207 aa)). An ATP-binding site is contributed by 154–209 (ALANWGSIFIKAASQGSSVGCYKVDDSSKVAQVLKDAFGYAPYVVVEKTIKARELE). Asp-284, Glu-297, and Asn-299 together coordinate Mg(2+).

Belongs to the D-alanine--D-alanine ligase family. Mg(2+) is required as a cofactor. The cofactor is Mn(2+).

It localises to the cytoplasm. It carries out the reaction 2 D-alanine + ATP = D-alanyl-D-alanine + ADP + phosphate + H(+). The protein operates within cell wall biogenesis; peptidoglycan biosynthesis. Cell wall formation. The polypeptide is D-alanine--D-alanine ligase (Shewanella putrefaciens (strain CN-32 / ATCC BAA-453)).